The following is a 273-amino-acid chain: Dermonecrotic toxin LsaSicTox-alphaIB1avi (273 aa).

The active site involves His5. Residues Glu25 and Asp27 each coordinate Mg(2+). Residue His41 is the Nucleophile of the active site. 2 disulfides stabilise this stretch: Cys45/Cys51 and Cys47/Cys190. A Mg(2+)-binding site is contributed by Asp85.

This sequence belongs to the arthropod phospholipase D family. Class II subfamily. It depends on Mg(2+) as a cofactor. As to expression, expressed by the venom gland.

Its subcellular location is the secreted. The catalysed reaction is an N-(acyl)-sphingosylphosphocholine = an N-(acyl)-sphingosyl-1,3-cyclic phosphate + choline. It catalyses the reaction an N-(acyl)-sphingosylphosphoethanolamine = an N-(acyl)-sphingosyl-1,3-cyclic phosphate + ethanolamine. The enzyme catalyses a 1-acyl-sn-glycero-3-phosphocholine = a 1-acyl-sn-glycero-2,3-cyclic phosphate + choline. It carries out the reaction a 1-acyl-sn-glycero-3-phosphoethanolamine = a 1-acyl-sn-glycero-2,3-cyclic phosphate + ethanolamine. Dermonecrotic toxins cleave the phosphodiester linkage between the phosphate and headgroup of certain phospholipids (sphingolipid and lysolipid substrates), forming an alcohol (often choline) and a cyclic phosphate. This toxin acts on sphingomyelin (SM). It may also act on ceramide phosphoethanolamine (CPE), lysophosphatidylcholine (LPC) and lysophosphatidylethanolamine (LPE), but not on lysophosphatidylserine (LPS), and lysophosphatidylglycerol (LPG). It acts by transphosphatidylation, releasing exclusively cyclic phosphate products as second products. Induces dermonecrosis, hemolysis, increased vascular permeability, edema, inflammatory response, and platelet aggregation. This is Dermonecrotic toxin LsaSicTox-alphaIB1avi from Loxosceles sabina (Tucson recluse spider).